The following is a 289-amino-acid chain: Putative transmembrane protein ORF111 (289 aa).

5 helical membrane-spanning segments follow: residues 1–21, 112–132, 151–171, 189–209, and 261–281; these read MIGPIVVLHLICAVGFSIFML, AIITIAIVGVVIGVFIIVCIA, IGITLFLLFLTLAGSVAFIVI, LNISWGFVCGILAISYSTSIL, and YLLTLCLLWWPAITIYFIGVG.

The protein localises to the host membrane. The chain is Putative transmembrane protein ORF111 from Ostreid herpesvirus 1 (isolate France) (OsHV-1).